We begin with the raw amino-acid sequence, 149 residues long: Large ribosomal subunit protein bL9 (149 aa).

It belongs to the bacterial ribosomal protein bL9 family.

Its function is as follows. Binds to the 23S rRNA. This is Large ribosomal subunit protein bL9 from Thermotoga petrophila (strain ATCC BAA-488 / DSM 13995 / JCM 10881 / RKU-1).